Here is a 127-residue protein sequence, read N- to C-terminus: Modulator protein MzrA (127 aa).

Over 1 to 9 (MQLPRVTLR) the chain is Cytoplasmic. A helical transmembrane segment spans residues 10-32 (QMTWTTSAIVLLGITLLLWSAFR). Over 33-127 (HQESTLAIRA…LLRDTSHRFG (95 aa)) the chain is Periplasmic.

Belongs to the MzrA family. Interacts with EnvZ.

It localises to the cell inner membrane. Modulates the activity of the EnvZ/OmpR two-component regulatory system, probably by directly modulating EnvZ enzymatic activity and increasing stability of phosphorylated OmpR. This chain is Modulator protein MzrA, found in Escherichia fergusonii (strain ATCC 35469 / DSM 13698 / CCUG 18766 / IAM 14443 / JCM 21226 / LMG 7866 / NBRC 102419 / NCTC 12128 / CDC 0568-73).